A 176-amino-acid polypeptide reads, in one-letter code: Ribosome maturation factor RimM (176 aa).

Residues 97–176 form the PRC barrel domain; sequence DNDFYHRDLI…QIVVDWDPDF (80 aa).

Belongs to the RimM family. In terms of assembly, binds ribosomal protein uS19.

It localises to the cytoplasm. An accessory protein needed during the final step in the assembly of 30S ribosomal subunit, possibly for assembly of the head region. Essential for efficient processing of 16S rRNA. May be needed both before and after RbfA during the maturation of 16S rRNA. It has affinity for free ribosomal 30S subunits but not for 70S ribosomes. In Shewanella denitrificans (strain OS217 / ATCC BAA-1090 / DSM 15013), this protein is Ribosome maturation factor RimM.